An 825-amino-acid chain; its full sequence is Zinc finger protein 28 (825 aa).

The interval 26-65 (RPGGGPAAGTVVAPGSPDRGRPRSRNSLASQDQQGAVTSG) is disordered. Over residues 33–42 (AGTVVAPGSP) the composition is skewed to low complexity. Polar residues predominate over residues 51-65 (NSLASQDQQGAVTSG). The KRAB domain maps to 103 to 174 (VTFGDVAVVF…KRKMRKGQHL (72 aa)). 14 C2H2-type zinc fingers span residues 377-399 (FQCN…QRIH), 405-427 (YKCN…QRCH), 433-456 (YECP…RYYH), 462-484 (FDCI…RRIH), 490-512 (YTCE…QRIH), 518-540 (YECE…QRVH), 546-568 (FKCK…WRIH), 574-596 (FECG…QRIH), 602-624 (YECK…QKTH), 630-652 (YECK…QRVH), 658-680 (YKCL…RRLH), 686-708 (YECV…RRCH), 714-736 (YECS…QRIH), and 742-764 (YECK…KRVH). The C2H2-type 15; degenerate zinc finger occupies 770 to 792 (YNYKKGRRAFRQTAHFAHHQQIH).

It belongs to the krueppel C2H2-type zinc-finger protein family. As to expression, expressed predominantly in ovary.

It is found in the nucleus. May be involved in transcriptional regulation. May have a role in embryonic development. The sequence is that of Zinc finger protein 28 (Zfp28) from Mus musculus (Mouse).